The sequence spans 475 residues: Ribulose bisphosphate carboxylase large chain (475 aa).

A propeptide spanning residues 1–2 (MS) is cleaved from the precursor. Position 3 is an N-acetylproline (Pro-3). Lys-14 carries the N6,N6,N6-trimethyllysine modification. Substrate is bound by residues Asn-123 and Thr-173. Lys-175 serves as the catalytic Proton acceptor. Lys-177 provides a ligand contact to substrate. Lys-201, Asp-203, and Glu-204 together coordinate Mg(2+). An N6-carboxylysine modification is found at Lys-201. His-294 functions as the Proton acceptor in the catalytic mechanism. Positions 295, 327, and 379 each coordinate substrate.

The protein belongs to the RuBisCO large chain family. Type I subfamily. As to quaternary structure, heterohexadecamer of 8 large chains and 8 small chains; disulfide-linked. The disulfide link is formed within the large subunit homodimers. Mg(2+) serves as cofactor. Post-translationally, the disulfide bond which can form in the large chain dimeric partners within the hexadecamer appears to be associated with oxidative stress and protein turnover.

The protein localises to the plastid. Its subcellular location is the chloroplast. The enzyme catalyses 2 (2R)-3-phosphoglycerate + 2 H(+) = D-ribulose 1,5-bisphosphate + CO2 + H2O. The catalysed reaction is D-ribulose 1,5-bisphosphate + O2 = 2-phosphoglycolate + (2R)-3-phosphoglycerate + 2 H(+). In terms of biological role, ruBisCO catalyzes two reactions: the carboxylation of D-ribulose 1,5-bisphosphate, the primary event in carbon dioxide fixation, as well as the oxidative fragmentation of the pentose substrate in the photorespiration process. Both reactions occur simultaneously and in competition at the same active site. In Oenothera argillicola (Appalachian evening primrose), this protein is Ribulose bisphosphate carboxylase large chain.